Reading from the N-terminus, the 368-residue chain is sn-1 linoleoyl-lipid 6-desaturase (368 aa).

Helical transmembrane passes span 47-67 (IILA…DVLW) and 68-88 (MKLL…FNIS). Residues 89-93 (HDGNH) carry the Histidine box-1 motif. The short motif at 124–129 (HNVLHH) is the Histidine box-2 element. The next 3 membrane-spanning stretches (helical) occupy residues 164-184 (WFIW…DVQT), 204-224 (IATL…IPIA), and 233-253 (VIGA…VFML). Residues 305 to 309 (HHLFP) carry the Histidine box-3 motif.

It belongs to the fatty acid desaturase type 2 family. Fe(2+) is required as a cofactor.

It localises to the cell inner membrane. It is found in the cellular thylakoid membrane. The enzyme catalyses a 1-[(9Z,12Z)-octadecdienoyl]-2-acyl-glycerolipid + 2 reduced [2Fe-2S]-[ferredoxin] + O2 + 2 H(+) = a 1-[(6Z,9Z,12Z)-octadectrienoyl]-2-acyl-glycerolipid + 2 oxidized [2Fe-2S]-[ferredoxin] + 2 H2O. It functions in the pathway lipid metabolism; polyunsaturated fatty acid biosynthesis. Its activity is regulated as follows. Activity requires ferredoxin, which is the natural electron donor, or cytochrome b5. In addition, activity is increased in the presence of the intermediate electron donors, NADPH and FADH(2). Its function is as follows. Desaturase involved in fatty acid biosynthesis. Introduces a double bond at carbon 6 of linoleoyl group (18:2) attached to the sn-1 position of the glycerol moiety of membrane glycerolipids, leading to the formation of gamma-linolenic acid (GLA). In Arthrospira platensis (Spirulina platensis), this protein is sn-1 linoleoyl-lipid 6-desaturase.